Consider the following 585-residue polypeptide: Arginine--tRNA ligase (585 aa).

The short motif at 131–141 (ANPTGPMHVGH) is the 'HIGH' region element.

Belongs to the class-I aminoacyl-tRNA synthetase family. Monomer.

The protein localises to the cytoplasm. It carries out the reaction tRNA(Arg) + L-arginine + ATP = L-arginyl-tRNA(Arg) + AMP + diphosphate. This chain is Arginine--tRNA ligase, found in Allorhizobium ampelinum (strain ATCC BAA-846 / DSM 112012 / S4) (Agrobacterium vitis (strain S4)).